Reading from the N-terminus, the 679-residue chain is Protein FAM178B (679 aa).

The disordered stretch occupies residues 70 to 113 (PLDQGPRCPARRPCSPASAPAPTSPKKPKIQAPGETFPTDWSPP). The segment covering 75-90 (PRCPARRPCSPASAPA) has biased composition (low complexity).

This sequence belongs to the FAM178 family.

The protein is Protein FAM178B of Homo sapiens (Human).